Consider the following 31-residue polypeptide: Cytochrome b6-f complex subunit 6 (31 aa).

The helical transmembrane segment at 4 to 24 (ILTYFGILFGILTITVIIFVA) threads the bilayer.

It belongs to the PetL family. In terms of assembly, the 4 large subunits of the cytochrome b6-f complex are cytochrome b6, subunit IV (17 kDa polypeptide, PetD), cytochrome f and the Rieske protein, while the 4 small subunits are PetG, PetL, PetM and PetN. The complex functions as a dimer.

It is found in the plastid. The protein localises to the chloroplast thylakoid membrane. Component of the cytochrome b6-f complex, which mediates electron transfer between photosystem II (PSII) and photosystem I (PSI), cyclic electron flow around PSI, and state transitions. PetL is important for photoautotrophic growth as well as for electron transfer efficiency and stability of the cytochrome b6-f complex. The sequence is that of Cytochrome b6-f complex subunit 6 from Chaetosphaeridium globosum (Charophycean green alga).